The primary structure comprises 426 residues: Pistil-specific extensin-like protein (426 aa).

The N-terminal stretch at 1-23 (MAVIISSKVLLIQLFVLVLGSFS) is a signal peptide. Disordered regions lie at residues 56–109 (GPTF…GSKL) and 121–254 (NLPD…AAEP). 4 stretches are compositionally biased toward pro residues: residues 60-94 (VLPPPSPLPSPPPPSPSPPPPSPSPPPPSTIPLIP), 123-161 (PDVPPIGGGPPVNQPKPSSPSPLVKPPPPPPSPCKPSPP), 168-224 (PPQP…PPPP), and 231-254 (LLPPPPPVAYPPVMTPSPSPAAEP). Tandem repeats lie at residues 69–73 (SPPPP), 76–80 (SPPPP), and 83–87 (SPPPP). Residues 69 to 182 (SPPPPSPSPP…PAKQPSPPPP (114 aa)) are 4 X 5 AA repeats of S-P(4). The stretch at 178-182 (SPPPP) is repeat 4. Asn310 carries an N-linked (GlcNAc...) asparagine glycan.

Pistil (stigma and style tissue).

This is Pistil-specific extensin-like protein from Nicotiana tabacum (Common tobacco).